A 441-amino-acid chain; its full sequence is Protein MONOCULM 1 (441 aa).

The tract at residues 1–33 (MLRSLHSSSSSDTDNNSGGCKNNGGGGGEAAAA) is disordered. The span at 7 to 20 (SSSSSDTDNNSGGC) shows a compositional bias: low complexity. Over residues 21–33 (KNNGGGGGEAAAA) the composition is skewed to gly residues. A GRAS domain is found at 41-437 (RAVAAAAPST…RPLLSVSAWQ (397 aa)). A leucine repeat I (LRI) region spans residues 48-126 (PSTRDLLLAC…GAARPASSGA (79 aa)). Residues 127-195 (YLAFNQIAPF…LGPPEVRVTG (69 aa)) form a VHIID region. Positions 158 to 162 (VHILD) match the VHIID motif. The segment at 205 to 256 (RTGNRLRAFARSIHLPFHFTPLLLSCATTAPHHVAGTSTGAAAAASTAAAAT) is leucine repeat II (LRII). The interval 266–361 (LAVNCVMFLH…QEVLGREIEA (96 aa)) is PFYRE. Residues 364–437 (GPSGGRWWRG…RPLLSVSAWQ (74 aa)) form an SAW region.

This sequence belongs to the GRAS family. In terms of tissue distribution, expressed in a small number of epidermal or subepidermal cells at the leaf axils, in axillary meristems and the entire tiller buds. Undetected in the shoot apical meristem.

It localises to the nucleus. In terms of biological role, putative transcription regulator that controls rice tillering by initiating axillary buds and promoting their outgrowth. Rice tiller is a specialized grain-bearing branch that is formed on the unelongated basal internode and grows independently of the mother stem (culm) by means of its own adventitious roots. The protein is Protein MONOCULM 1 of Oryza sativa subsp. japonica (Rice).